The primary structure comprises 387 residues: Protein spaetzle 5 (387 aa).

The N-terminal stretch at 1 to 29 (MTKSIKRPPPFSCKQVLLTYVILAYTVAA) is a signal peptide. The propeptide occupies 30 to 284 (HSSPPPCGLY…PLKKRSRTKR (255 aa)). The interval 133-197 (QTPFGGNPQR…SGGHLYINQS (65 aa)) is disordered. Asn195 and Asn204 each carry an N-linked (GlcNAc...) asparagine glycan. Disordered stretches follow at residues 219–256 (KQRQ…QSKR) and 269–291 (GVEA…GRST). Residues 237–247 (QTEEAEEQDNP) are compositionally biased toward acidic residues. Over residues 276-286 (LKKRSRTKRQS) the composition is skewed to basic residues. The region spanning 291–384 (TLCQTTSQFI…WFPSCCVCTI (94 aa)) is the Spaetzle domain. Intrachain disulfides connect Cys293–Cys350, Cys331–Cys380, and Cys340–Cys382.

Homodimer; disulfide-linked. Detected in the fan-shaped body which is a component of the locomotion center in the central nervous system (CNS) (at protein level).

Functionally, neurotrophin which may function as a ligand for the Toll-related receptors Toll-6 and Toll-7. Binds to Toll-7 and Toll-6, and probably acts as their ligands in the promotion of motor axon targeting and neuronal survival in the central nervous system (CNS). Involved in synaptic targeting of ISNb/d motorneurons and also some SNa motorneurons. May be involved in the normal development of specific neurons at the neuromuscular junction. This chain is Protein spaetzle 5, found in Drosophila melanogaster (Fruit fly).